The primary structure comprises 472 residues: Protein translocase subunit SecD (472 aa).

A run of 6 helical transmembrane segments spans residues 7 to 27, 298 to 318, 326 to 345, 349 to 368, 392 to 414, and 432 to 452; these read LLLL…KLPL, LVAG…YYRL, SLMI…GVTL, GIAG…VLIF, AFSS…FWFG, and SLFT…LSLP.

This sequence belongs to the SecD/SecF family. SecD subfamily. As to quaternary structure, forms a complex with SecF. Part of the essential Sec protein translocation apparatus which comprises SecA, SecYEG and auxiliary proteins SecDF. Other proteins may also be involved.

The protein resides in the cell inner membrane. Its function is as follows. Part of the Sec protein translocase complex. Interacts with the SecYEG preprotein conducting channel. SecDF uses the proton motive force (PMF) to complete protein translocation after the ATP-dependent function of SecA. Probably participates in protein translocation into and across both the cytoplasmic and thylakoid membranes in cyanobacterial cells. This Synechocystis sp. (strain ATCC 27184 / PCC 6803 / Kazusa) protein is Protein translocase subunit SecD.